Here is a 112-residue protein sequence, read N- to C-terminus: uncharacterized protein (112 aa).

2 consecutive transmembrane segments (helical) span residues 7–26 (PSFHFFIFFFLFCLLRTLDY) and 36–58 (TYMHIKLFFSYYFRFVHLFFFLY).

Its subcellular location is the membrane. This is an uncharacterized protein from Saccharomyces cerevisiae (strain ATCC 204508 / S288c) (Baker's yeast).